The primary structure comprises 564 residues: ATP-dependent RNA helicase ROK1 (564 aa).

Disordered stretches follow at residues 1 to 25 (MDIF…KAAD) and 62 to 87 (EDDR…DGLI). Composition is skewed to basic and acidic residues over residues 13 to 23 (VKKESGPKAKA) and 62 to 86 (EDDR…DDGL). A Q motif motif is present at residues 122-150 (DLISRFSFDRRLLNNLIENGFTEPTPIQC). In terms of domain architecture, Helicase ATP-binding spans 153 to 333 (IPVALNNRDV…QSIMMDPVRV (181 aa)). 166–173 (GPTGSGKT) lines the ATP pocket. The DEAD box signature appears at 280–283 (DEAD). Residues 344–506 (NIEQKLIFCG…EVSEWMDKMA (163 aa)) enclose the Helicase C-terminal domain. The tract at residues 512 to 564 (EKESIKNGKAHKERKQITTVPKMDKAKRRRQQEMIAASKRRKNEELSKKHFSK) is disordered. Residues 553 to 564 (KNEELSKKHFSK) are compositionally biased toward basic and acidic residues.

This sequence belongs to the DEAD box helicase family. DDX52/ROK1 subfamily. In terms of assembly, interacts with the U3 snoRNA and is associated with the 90S and 40S pre-ribosomes. This association requires the presence of RRP5. Also interacts with OSH3.

It is found in the nucleus. It localises to the nucleolus. The enzyme catalyses ATP + H2O = ADP + phosphate + H(+). Its function is as follows. ATP-dependent RNA helicase involved in 40S ribosomal subunit biogenesis. Required for the processing and cleavage of 35S pre-rRNA at sites A0, A1, and A2, leading to mature 18S rRNA. This Saccharomyces cerevisiae (strain YJM789) (Baker's yeast) protein is ATP-dependent RNA helicase ROK1 (ROK1).